Consider the following 91-residue polypeptide: uncharacterized protein (91 aa).

The N-terminal stretch at 1 to 21 is a signal peptide; that stretch reads MKQLLASPSLQLVTYPASATA.

It belongs to the BhsA/McbA family.

It is found in the periplasm. This is an uncharacterized protein from Escherichia coli O157:H7.